Consider the following 412-residue polypeptide: Phosphoglycerate kinase (412 aa).

Substrate contacts are provided by residues 24–26 (DLN), Arg47, 70–73 (HLGR), Arg130, and Arg167. Residues Lys217, Gly312, Glu343, and 369 to 372 (GGDS) contribute to the ATP site.

The protein belongs to the phosphoglycerate kinase family. In terms of assembly, monomer.

The protein resides in the cytoplasm. It catalyses the reaction (2R)-3-phosphoglycerate + ATP = (2R)-3-phospho-glyceroyl phosphate + ADP. It participates in carbohydrate degradation; glycolysis; pyruvate from D-glyceraldehyde 3-phosphate: step 2/5. The polypeptide is Phosphoglycerate kinase (Kineococcus radiotolerans (strain ATCC BAA-149 / DSM 14245 / SRS30216)).